The sequence spans 168 residues: Myosin regulatory light chain 11 (168 aa).

Ala2 is subject to N,N,N-trimethylalanine. Position 15 is a phosphoserine (Ser15). EF-hand domains follow at residues 24 to 59 (TQIQEFKEAFTVIDQNRDGIIDKDDLRETFAAMGRL), 94 to 129 (DPEDVIMGAFKVLDPDGKGSIKKSFLEELLTTQCDR), and 130 to 165 (FTPEEIKNMWAAFPPDVAGNVDYKNICYVITHGEDK). Ca(2+)-binding residues include Asp37, Asn39, Asp41, and Asp48.

As to quaternary structure, myosin is a hexamer of 2 heavy chains and 4 light chains. The N-terminus is blocked. N,N,N-trimethylalanine, found in other myosin light chains would not have been detected in the N-terminal tryptic peptide in PubMed:7358336 because it would remain trimethylated and ninhydrin negative after hydrolysis.

Its function is as follows. Myosin regulatory subunit that plays an essential to maintain muscle integrity during early development. Plays a role in muscle contraction. In Gallus gallus (Chicken), this protein is Myosin regulatory light chain 11 (MYL11).